Reading from the N-terminus, the 58-residue chain is Photosystem II reaction center protein K (58 aa).

Positions 1–21 (MTVSYSIYLENSLHFGDALLA) are excised as a propeptide. The helical transmembrane segment at 29-49 (IFDPIVDVMPVIPVFFLLLAF) threads the bilayer.

The protein belongs to the PsbK family. As to quaternary structure, PSII is composed of 1 copy each of membrane proteins PsbA, PsbB, PsbC, PsbD, PsbE, PsbF, PsbH, PsbI, PsbJ, PsbK, PsbL, PsbM, PsbT, PsbX, PsbY, PsbZ, Psb30/Ycf12, at least 3 peripheral proteins of the oxygen-evolving complex and a large number of cofactors. It forms dimeric complexes.

It is found in the plastid. The protein resides in the chloroplast thylakoid membrane. Functionally, one of the components of the core complex of photosystem II (PSII). PSII is a light-driven water:plastoquinone oxidoreductase that uses light energy to abstract electrons from H(2)O, generating O(2) and a proton gradient subsequently used for ATP formation. It consists of a core antenna complex that captures photons, and an electron transfer chain that converts photonic excitation into a charge separation. This is Photosystem II reaction center protein K from Adiantum capillus-veneris (Maidenhair fern).